The following is a 427-amino-acid chain: BRO1 domain-containing protein BROX homolog (427 aa).

Positions 1 to 427 (MSHWFHRNPI…PSNSSGCVIA (427 aa)) constitute a BRO1 domain.

This sequence belongs to the BROX family.

The chain is BRO1 domain-containing protein BROX homolog from Caenorhabditis elegans.